We begin with the raw amino-acid sequence, 151 residues long: Ubiquitin-conjugating enzyme E2 W (151 aa).

Residue Met1 forms a Peptide (Met-Gly) (interchain with G-Cter in ubiquitin) linkage. One can recognise a UBC core domain in the interval Ser3–Cys151. Residue Cys91 is the Glycyl thioester intermediate of the active site.

The protein belongs to the ubiquitin-conjugating enzyme family. In terms of assembly, homodimer. Interacts with FANCL. Interacts with STUB1/CHIP. Post-translationally, autoubiquitinated at Met-1.

It is found in the nucleus. It catalyses the reaction S-ubiquitinyl-[E1 ubiquitin-activating enzyme]-L-cysteine + [E2 ubiquitin-conjugating enzyme]-L-cysteine = [E1 ubiquitin-activating enzyme]-L-cysteine + S-ubiquitinyl-[E2 ubiquitin-conjugating enzyme]-L-cysteine.. The enzyme catalyses S-ubiquitinyl-[E1 ubiquitin-activating enzyme]-L-cysteine + [acceptor protein]-N-terminal-amino acid = [E1 ubiquitin-activating enzyme]-L-cysteine + N-terminal-ubiquitinyl-[acceptor protein].. The protein operates within protein modification; protein ubiquitination. Accepts ubiquitin from the E1 complex and catalyzes its covalent attachment to other proteins. Specifically monoubiquitinates the N-terminus of various substrates, including ATXN3, MAPT/TAU, POLR2H/RPB8 and STUB1/CHIP, by recognizing backbone atoms of disordered N-termini. Involved in degradation of misfolded chaperone substrates by mediating monoubiquitination of STUB1/CHIP, leading to recruitment of ATXN3 to monoubiquitinated STUB1/CHIP, and restriction of the length of ubiquitin chain attached to STUB1/CHIP substrates by ATXN3. After UV irradiation, but not after mitomycin-C (MMC) treatment, acts as a specific E2 ubiquitin-conjugating enzyme for the Fanconi anemia complex by associating with E3 ubiquitin-protein ligase FANCL and catalyzing monoubiquitination of FANCD2, a key step in the DNA damage pathway. In vitro catalyzes 'Lys-11'-linked polyubiquitination. UBE2W-catalyzed ubiquitination also occurs in the presence of inactive RING/U-box type E3s, i.e. lacking the active site cysteine residues to form thioester bonds with ubiquitin, or even in the absence of E3, albeit at a slower rate. The chain is Ubiquitin-conjugating enzyme E2 W (Ube2w) from Mus musculus (Mouse).